The following is a 218-amino-acid chain: Ohanin-like protein (218 aa).

A signal peptide spans 1-40 (MSPSAGFQFSLYFLQTKKVLWKLTGLCYILLFTLCFFADQ). The propeptide occupies 41 to 48 (ENGGKALA). The B30.2/SPRY domain maps to 49–155 (SPPGIWKRAD…RIWQTGLWWL (107 aa)). Positions 156-218 (RHLETDPGRV…LGGTVSLTTL (63 aa)) are excised as a propeptide.

Belongs to the ohanin/vespryn family. As to expression, expressed by the venom gland.

The protein resides in the secreted. Functionally, neurotoxin that produces dose-dependent hypolocomotion and hyperalgesia in mice. May directly act on the central nervous system, as it is 6500-fold more potent when administered intracerebroventricularly than intraperitoneal. The chain is Ohanin-like protein from Lachesis muta muta (Bushmaster).